The following is a 502-amino-acid chain: Probable cytochrome P450 554A1 (502 aa).

A helical membrane pass occupies residues 3 to 20 (LLLFIFFLILFYYSVKYY). A heme-binding site is contributed by Cys-448.

It belongs to the cytochrome P450 family. Requires heme as cofactor.

The protein localises to the membrane. This Dictyostelium discoideum (Social amoeba) protein is Probable cytochrome P450 554A1 (cyp554A1).